The sequence spans 430 residues: Trigger factor (430 aa).

In terms of domain architecture, PPIase FKBP-type spans 163–248 (GDTAVFDFAG…LHEVKTKQVP (86 aa)).

It belongs to the FKBP-type PPIase family. Tig subfamily.

The protein resides in the cytoplasm. It carries out the reaction [protein]-peptidylproline (omega=180) = [protein]-peptidylproline (omega=0). In terms of biological role, involved in protein export. Acts as a chaperone by maintaining the newly synthesized protein in an open conformation. Functions as a peptidyl-prolyl cis-trans isomerase. The protein is Trigger factor of Exiguobacterium sp. (strain ATCC BAA-1283 / AT1b).